We begin with the raw amino-acid sequence, 398 residues long: Phosphoglycerate kinase (398 aa).

Substrate contacts are provided by residues 21 to 23, arginine 36, 59 to 62, arginine 119, and arginine 157; these read DFN and HLGR. ATP is bound by residues lysine 208, glycine 296, glutamate 327, and 354 to 357; that span reads GGDS.

This sequence belongs to the phosphoglycerate kinase family. In terms of assembly, monomer.

The protein resides in the cytoplasm. The enzyme catalyses (2R)-3-phosphoglycerate + ATP = (2R)-3-phospho-glyceroyl phosphate + ADP. The protein operates within carbohydrate degradation; glycolysis; pyruvate from D-glyceraldehyde 3-phosphate: step 2/5. The chain is Phosphoglycerate kinase from Streptococcus pneumoniae (strain Taiwan19F-14).